A 109-amino-acid polypeptide reads, in one-letter code: uncharacterized protein (109 aa).

3 consecutive transmembrane segments (helical) span residues 16–36, 54–74, and 80–100; these read YIPL…YYGL, TVYF…LLCL, and FCSS…TLAM.

It is found in the membrane. This is an uncharacterized protein from Schizosaccharomyces pombe (strain 972 / ATCC 24843) (Fission yeast).